Reading from the N-terminus, the 83-residue chain is Large ribosomal subunit protein eL14 (83 aa).

The protein belongs to the eukaryotic ribosomal protein eL14 family.

In Thermococcus gammatolerans (strain DSM 15229 / JCM 11827 / EJ3), this protein is Large ribosomal subunit protein eL14.